We begin with the raw amino-acid sequence, 323 residues long: Aldo-keto reductase family 1 member C13 (323 aa).

NAD(+)-binding positions include 20–24 (GFGTY), Asp-50, and Tyr-55. Tyr-55 (proton donor) is an active-site residue. His-117 serves as a coordination point for substrate. NAD(+)-binding positions include 166 to 167 (SN), Gln-190, 216 to 224 (YGALGTQRY), and 270 to 280 (QSFKENEMREN).

The protein belongs to the aldo/keto reductase family.

Catalyzes the dehydrogenation of 17-beta-hydroxysteroids. May also exhibit significant activity with a variety of cyclic and alicyclic alcohols. Uses both NAD and NADP, but the activity is much greater with NAD than with NADP. The protein is Aldo-keto reductase family 1 member C13 (Akr1c13) of Mus musculus (Mouse).